The chain runs to 183 residues: NADH-quinone oxidoreductase subunit A (183 aa).

The next 3 membrane-spanning stretches (helical) occupy residues 11–31 (IIAFVIGVTFLCVFMLTVPLL), 63–83 (FYLVAIFFVVFDLEALYLYAW), and 98–118 (MVIFVVDLLIALIYVFATGAL). Residues 160–183 (GHIPAQSSGRMKSKTSTAPSSKQE) form a disordered region. Residues 164–183 (AQSSGRMKSKTSTAPSSKQE) are compositionally biased toward polar residues.

The protein belongs to the complex I subunit 3 family. In terms of assembly, NDH-1 is composed of 14 different subunits. Subunits NuoA, H, J, K, L, M, N constitute the membrane sector of the complex.

It is found in the cell inner membrane. The catalysed reaction is a quinone + NADH + 5 H(+)(in) = a quinol + NAD(+) + 4 H(+)(out). In terms of biological role, NDH-1 shuttles electrons from NADH, via FMN and iron-sulfur (Fe-S) centers, to quinones in the respiratory chain. The immediate electron acceptor for the enzyme in this species is believed to be ubiquinone. Couples the redox reaction to proton translocation (for every two electrons transferred, four hydrogen ions are translocated across the cytoplasmic membrane), and thus conserves the redox energy in a proton gradient. The sequence is that of NADH-quinone oxidoreductase subunit A from Acinetobacter baylyi (strain ATCC 33305 / BD413 / ADP1).